Consider the following 736-residue polypeptide: DNA topoisomerase 1 (736 aa).

Positions 2–113 (KHLIIVESPA…SYPRIVFHEI (112 aa)) constitute a Toprim domain. Mg(2+) is bound by residues glutamate 8 and aspartate 82. The region spanning 129–552 (DMSKVNAQQA…DFYYPFMDKI (424 aa)) is the Topo IA-type catalytic domain. The segment at 163–168 (SAGRVQ) is interaction with DNA. The O-(5'-phospho-DNA)-tyrosine intermediate role is filled by tyrosine 297. 4 consecutive C4-type zinc fingers follow at residues 572 to 598 (CPKC…YPKC), 616 to 642 (CEKC…YPEC), 663 to 689 (CPEC…YPKC), and 702 to 725 (CEKC…CIKC).

The protein belongs to the type IA topoisomerase family. Monomer. Mg(2+) is required as a cofactor.

The catalysed reaction is ATP-independent breakage of single-stranded DNA, followed by passage and rejoining.. Functionally, releases the supercoiling and torsional tension of DNA, which is introduced during the DNA replication and transcription, by transiently cleaving and rejoining one strand of the DNA duplex. Introduces a single-strand break via transesterification at a target site in duplex DNA. The scissile phosphodiester is attacked by the catalytic tyrosine of the enzyme, resulting in the formation of a DNA-(5'-phosphotyrosyl)-enzyme intermediate and the expulsion of a 3'-OH DNA strand. The free DNA strand then undergoes passage around the unbroken strand, thus removing DNA supercoils. Finally, in the religation step, the DNA 3'-OH attacks the covalent intermediate to expel the active-site tyrosine and restore the DNA phosphodiester backbone. This chain is DNA topoisomerase 1, found in Helicobacter pylori (strain ATCC 700392 / 26695) (Campylobacter pylori).